The sequence spans 822 residues: Telomere length regulation protein TEL2 homolog (822 aa).

The tract at residues 442–504 (NDDEEEQPDA…ADQEKKKSAP (63 aa)) is disordered. The span at 465-477 (VSSQSVASDPGNG) shows a compositional bias: polar residues. The segment covering 480–489 (SELDSDDDLT) has biased composition (acidic residues).

It belongs to the TEL2 family.

The protein localises to the cytoplasm. It localises to the membrane. Its subcellular location is the nucleus. Regulator of the DNA damage response (DDR). Part of the TTT complex that is required to stabilize protein levels of the phosphatidylinositol 3-kinase-related protein kinase (PIKK) family proteins. Promotes assembly, stabilizes and maintains the activity of TORC complexes, which regulate cell growth and survival in response to nutrient and hormonal signals. May be involved in telomere length regulation. In Danio rerio (Zebrafish), this protein is Telomere length regulation protein TEL2 homolog (telo2).